The primary structure comprises 135 residues: Interleukin-4 (135 aa).

Residues 1 to 24 (MGLTYQLIPVLVCLLVCTSHFVHG) form the signal peptide. Cystine bridges form between cysteine 27–cysteine 135, cysteine 48–cysteine 85, and cysteine 70–cysteine 105. The N-linked (GlcNAc...) asparagine glycan is linked to asparagine 62.

This sequence belongs to the IL-4/IL-13 family.

Its subcellular location is the secreted. Participates in at least several B-cell activation processes as well as of other cell types. It is a costimulator of DNA-synthesis. It induces the expression of class II MHC molecules on resting B-cells. It enhances both secretion and cell surface expression of IgE and IgG1. It also regulates the expression of the low affinity Fc receptor for IgE (CD23) on both lymphocytes and monocytes. Positively regulates IL31RA expression in macrophages. Stimulates autophagy in dendritic cells by interfering with mTORC1 signaling and through the induction of RUFY4. In Bubalus carabanensis (Swamp type water buffalo), this protein is Interleukin-4 (IL4).